The primary structure comprises 89 residues: Small ribosomal subunit protein uS15 (89 aa).

The segment at 1-23 (MALTKERTASVVQQYGSGEKDTG) is disordered.

The protein belongs to the universal ribosomal protein uS15 family. Part of the 30S ribosomal subunit. Forms a bridge to the 50S subunit in the 70S ribosome, contacting the 23S rRNA.

Its function is as follows. One of the primary rRNA binding proteins, it binds directly to 16S rRNA where it helps nucleate assembly of the platform of the 30S subunit by binding and bridging several RNA helices of the 16S rRNA. In terms of biological role, forms an intersubunit bridge (bridge B4) with the 23S rRNA of the 50S subunit in the ribosome. This is Small ribosomal subunit protein uS15 from Treponema pallidum (strain Nichols).